The primary structure comprises 204 residues: Protein GET1 (204 aa).

The Lumenal segment spans residues M1–L4. The chain crosses the membrane as a helical span at residues L5–T24. Residues T25–R110 lie on the Cytoplasmic side of the membrane. A coiled-coil region spans residues A72 to T107. The chain crosses the membrane as a helical span at residues T111–F131. At W132–S155 the chain is on the lumenal side. Residues V156–M172 traverse the membrane as a helical segment. Residues I173–S204 lie on the Cytoplasmic side of the membrane.

It belongs to the WRB/GET1 family. As to quaternary structure, interacts with GET3.

Its subcellular location is the endoplasmic reticulum membrane. In terms of biological role, required for the post-translational delivery of tail-anchored (TA) proteins to the endoplasmic reticulum. Acts as a membrane receptor for soluble GET3, which recognizes and selectively binds the transmembrane domain of TA proteins in the cytosol. This Podospora anserina (strain S / ATCC MYA-4624 / DSM 980 / FGSC 10383) (Pleurage anserina) protein is Protein GET1.